Reading from the N-terminus, the 88-residue chain is YcgL domain-containing protein HI_1446 (88 aa).

In terms of domain architecture, YcgL spans 1-85; the sequence is MLCAIYKSKK…QDDGLFNSLS (85 aa).

The sequence is that of YcgL domain-containing protein HI_1446 from Haemophilus influenzae (strain ATCC 51907 / DSM 11121 / KW20 / Rd).